The chain runs to 81 residues: Exodeoxyribonuclease 7 small subunit (81 aa).

This sequence belongs to the XseB family. In terms of assembly, heterooligomer composed of large and small subunits.

Its subcellular location is the cytoplasm. The catalysed reaction is Exonucleolytic cleavage in either 5'- to 3'- or 3'- to 5'-direction to yield nucleoside 5'-phosphates.. Functionally, bidirectionally degrades single-stranded DNA into large acid-insoluble oligonucleotides, which are then degraded further into small acid-soluble oligonucleotides. In Pasteurella multocida (strain Pm70), this protein is Exodeoxyribonuclease 7 small subunit.